A 179-amino-acid polypeptide reads, in one-letter code: Large ribosomal subunit protein uL6 (179 aa).

The protein belongs to the universal ribosomal protein uL6 family. Part of the 50S ribosomal subunit.

This protein binds to the 23S rRNA, and is important in its secondary structure. It is located near the subunit interface in the base of the L7/L12 stalk, and near the tRNA binding site of the peptidyltransferase center. This Synechococcus sp. (strain WH7803) protein is Large ribosomal subunit protein uL6.